We begin with the raw amino-acid sequence, 648 residues long: Chaperone protein HtpG (648 aa).

The a; substrate-binding stretch occupies residues 1–353 (MNARVEQLEF…AQDMSLNVSR (353 aa)). Residues 354-567 (EILQQDRQIK…TFGITPALAR (214 aa)) are b. Residues 568-648 (IYRATGQDVP…LLADRLTRTL (81 aa)) are c.

It belongs to the heat shock protein 90 family. As to quaternary structure, homodimer.

Its subcellular location is the cytoplasm. In terms of biological role, molecular chaperone. Has ATPase activity. The chain is Chaperone protein HtpG from Mycobacterium ulcerans (strain Agy99).